The chain runs to 566 residues: Oxygen-dependent choline dehydrogenase (566 aa).

7-36 (DYIICGAGSAGNVLATRLTEDPNVTVLLLE) contacts FAD. Positions 180-203 (NGYQQEGFGPMDRTVTPKGRRAST) are disordered. His474 functions as the Proton acceptor in the catalytic mechanism.

This sequence belongs to the GMC oxidoreductase family. It depends on FAD as a cofactor.

It catalyses the reaction choline + A = betaine aldehyde + AH2. The enzyme catalyses betaine aldehyde + NAD(+) + H2O = glycine betaine + NADH + 2 H(+). The protein operates within amine and polyamine biosynthesis; betaine biosynthesis via choline pathway; betaine aldehyde from choline (cytochrome c reductase route): step 1/1. Involved in the biosynthesis of the osmoprotectant glycine betaine. Catalyzes the oxidation of choline to betaine aldehyde and betaine aldehyde to glycine betaine at the same rate. The chain is Oxygen-dependent choline dehydrogenase from Burkholderia ambifaria (strain MC40-6).